Here is a 236-residue protein sequence, read N- to C-terminus: MKTQLYKGSSKILYSAEEDFLLIMAFSDNVTLESGEIIEISGKGVLNNNISSFLMDKLEMNGIENHFIEKINMREQLIQYVEVFPVQVIISSVACGRFVKEFGMDEGYVFDKPIIDFKVRSREFKYPIVNEYQILNFGWLTRDEIKAVKEQALRIYDFLSGLFIGVGIRLVECKLEFGRVFNGEESIIMLTDEISPDNCRLWHINSNEKLGFELLENEPNKAFESYQLIADRLKEK.

The protein belongs to the SAICAR synthetase family.

The enzyme catalyses 5-amino-1-(5-phospho-D-ribosyl)imidazole-4-carboxylate + L-aspartate + ATP = (2S)-2-[5-amino-1-(5-phospho-beta-D-ribosyl)imidazole-4-carboxamido]succinate + ADP + phosphate + 2 H(+). It functions in the pathway purine metabolism; IMP biosynthesis via de novo pathway; 5-amino-1-(5-phospho-D-ribosyl)imidazole-4-carboxamide from 5-amino-1-(5-phospho-D-ribosyl)imidazole-4-carboxylate: step 1/2. This is Phosphoribosylaminoimidazole-succinocarboxamide synthase from Rickettsia felis (strain ATCC VR-1525 / URRWXCal2) (Rickettsia azadi).